The following is a 335-amino-acid chain: tRNA N6-adenosine threonylcarbamoyltransferase (335 aa).

A divalent metal cation-binding residues include His109, His113, and Tyr130. Residues 130 to 134 (YVSGG), Asp162, Gly177, Glu181, and Asn266 contribute to the substrate site. Asp294 serves as a coordination point for a divalent metal cation.

Belongs to the KAE1 / TsaD family. As to quaternary structure, component of the EKC/KEOPS complex composed of at least tp53rk, tprkb, osgep and lage3; the whole complex dimerizes. A divalent metal cation is required as a cofactor.

Its subcellular location is the cytoplasm. It is found in the nucleus. The enzyme catalyses L-threonylcarbamoyladenylate + adenosine(37) in tRNA = N(6)-L-threonylcarbamoyladenosine(37) in tRNA + AMP + H(+). In terms of biological role, component of the EKC/KEOPS complex that is required for the formation of a threonylcarbamoyl group on adenosine at position 37 (t(6)A37) in tRNAs that read codons beginning with adenine. The complex is probably involved in the transfer of the threonylcarbamoyl moiety of threonylcarbamoyl-AMP (TC-AMP) to the N6 group of A37. OSGEP likely plays a direct catalytic role in this reaction, but requires other protein(s) of the complex to fulfill this activity. This chain is tRNA N6-adenosine threonylcarbamoyltransferase, found in Danio rerio (Zebrafish).